The chain runs to 303 residues: Glycine--tRNA ligase alpha subunit (303 aa).

Belongs to the class-II aminoacyl-tRNA synthetase family. In terms of assembly, tetramer of two alpha and two beta subunits.

The protein resides in the cytoplasm. It carries out the reaction tRNA(Gly) + glycine + ATP = glycyl-tRNA(Gly) + AMP + diphosphate. This Syntrophomonas wolfei subsp. wolfei (strain DSM 2245B / Goettingen) protein is Glycine--tRNA ligase alpha subunit.